Reading from the N-terminus, the 450-residue chain is Solute carrier family 52, riboflavin transporter, member 2 (450 aa).

5 helical membrane passes run L14 to L34, L47 to L67, I79 to W99, F114 to L136, and F147 to V167. N178 carries an N-linked (GlcNAc...) asparagine glycan. Residues F201–L221 traverse the membrane as a helical segment. The segment at A230–S268 is disordered. The segment covering G242–A252 has biased composition (acidic residues). Helical transmembrane passes span A282 to V302, L317 to L337, L344 to L364, V371 to F391, and A409 to F429.

Belongs to the riboflavin transporter family. In terms of tissue distribution, highly expressed in the placenta and small intestine, moderately in the kidney, colon, lung, prostate, uterus, and thymus, and weakly in all other tissues.

It is found in the cell membrane. It catalyses the reaction riboflavin(in) = riboflavin(out). With respect to regulation, riboflavin transport is Na(+)-independent but moderately pH-sensitive. Activity is strongly inhibited by riboflavin analogs, such as lumiflavin. Weakly inhibited by flavin adenine dinucleotide (FAD) and flavin mononucleotide (FMN). Functionally, plasma membrane transporter mediating the uptake by cells of the water soluble vitamin B2/riboflavin that plays a key role in biochemical oxidation-reduction reactions of the carbohydrate, lipid, and amino acid metabolism. May also act as a receptor for 4-hydroxybutyrate. The sequence is that of Solute carrier family 52, riboflavin transporter, member 2 (Slc52a2) from Rattus norvegicus (Rat).